A 152-amino-acid polypeptide reads, in one-letter code: SsrA-binding protein (152 aa).

Belongs to the SmpB family.

The protein localises to the cytoplasm. Required for rescue of stalled ribosomes mediated by trans-translation. Binds to transfer-messenger RNA (tmRNA), required for stable association of tmRNA with ribosomes. tmRNA and SmpB together mimic tRNA shape, replacing the anticodon stem-loop with SmpB. tmRNA is encoded by the ssrA gene; the 2 termini fold to resemble tRNA(Ala) and it encodes a 'tag peptide', a short internal open reading frame. During trans-translation Ala-aminoacylated tmRNA acts like a tRNA, entering the A-site of stalled ribosomes, displacing the stalled mRNA. The ribosome then switches to translate the ORF on the tmRNA; the nascent peptide is terminated with the 'tag peptide' encoded by the tmRNA and targeted for degradation. The ribosome is freed to recommence translation, which seems to be the essential function of trans-translation. In Rickettsia montanensis, this protein is SsrA-binding protein.